The following is a 217-amino-acid chain: MOB kinase activator 3A (217 aa).

Zn(2+)-binding residues include Cys83, Cys88, His165, and His170.

It belongs to the MOB1/phocein family.

In terms of biological role, may regulate the activity of kinases. The polypeptide is MOB kinase activator 3A (MOB3A) (Pongo abelii (Sumatran orangutan)).